Here is a 457-residue protein sequence, read N- to C-terminus: Argininosuccinate lyase (457 aa).

Belongs to the lyase 1 family. Argininosuccinate lyase subfamily.

It is found in the cytoplasm. The enzyme catalyses 2-(N(omega)-L-arginino)succinate = fumarate + L-arginine. It participates in amino-acid biosynthesis; L-arginine biosynthesis; L-arginine from L-ornithine and carbamoyl phosphate: step 3/3. The sequence is that of Argininosuccinate lyase from Yersinia pseudotuberculosis serotype O:1b (strain IP 31758).